The chain runs to 271 residues: Beta-lysine N(6)-acetyltransferase (271 aa).

The segment at 86-122 is disordered; sequence LRKDRGTGKNQKKKKISRKKDNWKKRKEKSRLPEGYT. Residues 95–114 are compositionally biased toward basic residues; the sequence is NQKKKKISRKKDNWKKRKEK. Positions 121–269 constitute an N-acetyltransferase domain; it reads YTLRPAVQAD…GFEDMNIWCR (149 aa).

It belongs to the acetyltransferase family.

The enzyme catalyses (3S)-3,6-diaminohexanoate + acetyl-CoA = (3S)-6-acetamido-3-aminohexanoate + CoA + H(+). Its function is as follows. Catalyzes the acetylation of beta-lysine to N6-acetyl-beta-lysine, a compatible solute produced by methanogenic archaea that helps cells to cope with salt stress. The chain is Beta-lysine N(6)-acetyltransferase from Methanosarcina mazei (strain ATCC BAA-159 / DSM 3647 / Goe1 / Go1 / JCM 11833 / OCM 88) (Methanosarcina frisia).